Here is a 542-residue protein sequence, read N- to C-terminus: uncharacterized protein (542 aa).

Residues 1-78 are Extracellular-facing; the sequence is MSVQKEEYDI…EEKKLVRKMD (78 aa). Residues 79 to 99 traverse the membrane as a helical segment; the sequence is LKIFLWVFIMFAFLDLIRKNI. The Cytoplasmic segment spans residues 100-119; the sequence is ARAVSDNFIVDLKMNTNDYN. Residues 120–140 form a helical membrane-spanning segment; the sequence is LGQTVYLVIFLASELPGNLLS. At 141 to 147 the chain is on the extracellular side; the sequence is KRFGPER. Residues 148–168 form a helical membrane-spanning segment; sequence VIPVQIVLWSVICITQAGLKN. Residues 169–176 lie on the Cytoplasmic side of the membrane; sequence RGQFIATR. Residues 177–197 traverse the membrane as a helical segment; it reads CLLGMVQGGFIPDNILYLSYY. The Extracellular portion of the chain corresponds to 198-208; the sequence is YTGAELTFRLS. A helical membrane pass occupies residues 209–229; sequence FFWCAIPLFQILGSLLASGII. The Cytoplasmic portion of the chain corresponds to 230–241; that stretch reads EMRGIHNLAGWQ. Residues 242-262 form a helical membrane-spanning segment; that stretch reads YLFIIEGFLSLSVGVASFYLM. The Extracellular portion of the chain corresponds to 263-326; the sequence is RRGPTQTGES…TLTEFDLWPL (64 aa). A helical transmembrane segment spans residues 327–347; it reads FIQGITAFISLQTVGSYLSLI. Topologically, residues 348-359 are cytoplasmic; it reads LKSLNYSTFLSN. A helical transmembrane segment spans residues 360–380; the sequence is ILAIPGQALLLINLPLAALLS. Residues 381–387 are Extracellular-facing; that stretch reads RKLKEKS. Residues 388–408 traverse the membrane as a helical segment; that stretch reads LCVGIANVWVLPFIVSLVALP. The Cytoplasmic segment spans residues 409–416; it reads TDTNPWIK. A helical membrane pass occupies residues 417–437; the sequence is YILLTGILGLPYTHSILAGWV. Residues 438–482 lie on the Extracellular side of the membrane; that stretch reads SEISNSVRSRTVGTALYNMSAQVGAIIASNMYRNDDKPYYTRGNK. The helical transmembrane segment at 483 to 503 threads the bilayer; it reads ILLGFTCFNICMAVATKFYYI. Topologically, residues 504–542 are cytoplasmic; that stretch reads SRNKYKDRKWNSMTKEEQINYLDTTKDKGMKRLDYRFIH.

The protein belongs to the major facilitator superfamily. Allantoate permease family.

It localises to the membrane. This is an uncharacterized protein from Saccharomyces cerevisiae (strain ATCC 204508 / S288c) (Baker's yeast).